Reading from the N-terminus, the 321-residue chain is Beta-ketoacyl-[acyl-carrier-protein] synthase III (321 aa).

Residues C113 and H246 contribute to the active site. The ACP-binding stretch occupies residues 247–251 (QANVR). N276 is an active-site residue.

The protein belongs to the thiolase-like superfamily. FabH family. As to quaternary structure, homodimer.

It is found in the cytoplasm. The catalysed reaction is malonyl-[ACP] + acetyl-CoA + H(+) = 3-oxobutanoyl-[ACP] + CO2 + CoA. The protein operates within lipid metabolism; fatty acid biosynthesis. Its function is as follows. Catalyzes the condensation reaction of fatty acid synthesis by the addition to an acyl acceptor of two carbons from malonyl-ACP. Catalyzes the first condensation reaction which initiates fatty acid synthesis and may therefore play a role in governing the total rate of fatty acid production. Possesses both acetoacetyl-ACP synthase and acetyl transacylase activities. Its substrate specificity determines the biosynthesis of branched-chain and/or straight-chain of fatty acids. The protein is Beta-ketoacyl-[acyl-carrier-protein] synthase III of Enterococcus faecalis (strain ATCC 700802 / V583).